We begin with the raw amino-acid sequence, 201 residues long: Glycerol-3-phosphate acyltransferase (201 aa).

5 consecutive transmembrane segments (helical) span residues 10–30 (MLIGALIFGYVLGSIPFGLIL), 60–80 (LAAATLILDALKGTAAALIAA), 86–106 (AAIAAGFGAFIGHLFPVWIGF), 116–136 (LGVLIGLAWAGALVFAAAWIV), and 166–186 (ALAALFAIMTVIVFIKHRANI).

The protein belongs to the PlsY family. Probably interacts with PlsX.

The protein localises to the cell inner membrane. It carries out the reaction an acyl phosphate + sn-glycerol 3-phosphate = a 1-acyl-sn-glycero-3-phosphate + phosphate. Its pathway is lipid metabolism; phospholipid metabolism. Its function is as follows. Catalyzes the transfer of an acyl group from acyl-phosphate (acyl-PO(4)) to glycerol-3-phosphate (G3P) to form lysophosphatidic acid (LPA). This enzyme utilizes acyl-phosphate as fatty acyl donor, but not acyl-CoA or acyl-ACP. The sequence is that of Glycerol-3-phosphate acyltransferase from Brucella melitensis biotype 2 (strain ATCC 23457).